A 311-amino-acid chain; its full sequence is Pyrimidine-specific ribonucleoside hydrolase RihA (311 aa).

His240 is an active-site residue.

Belongs to the IUNH family. RihA subfamily.

In terms of biological role, hydrolyzes with equal efficiency cytidine or uridine to ribose and cytosine or uracil, respectively. The chain is Pyrimidine-specific ribonucleoside hydrolase RihA from Escherichia coli O157:H7.